Consider the following 415-residue polypeptide: Peptide chain release factor subunit 1 (415 aa).

Belongs to the eukaryotic release factor 1 family. In terms of assembly, heterodimer of two subunits, one of which binds GTP.

It localises to the cytoplasm. Its function is as follows. Directs the termination of nascent peptide synthesis (translation) in response to the termination codons UAA, UAG and UGA. In Thermococcus onnurineus (strain NA1), this protein is Peptide chain release factor subunit 1.